Reading from the N-terminus, the 411-residue chain is Metal-binding regulatory protein cuf1 (411 aa).

Residues 1 to 40 (MVVINNVKMACMKCIRGHRSSTCKHNDRELFPIRPKGRPI) constitute a DNA-binding region (copper-fist). C11, C14, C23, and H25 together coordinate Zn(2+). Residues 63–92 (SRKKGSKCSTSSTTDLDSSSASNSSCSIPS) form a disordered region. Over residues 69–92 (KCSTSSTTDLDSSSASNSSCSIPS) the composition is skewed to low complexity.

The protein localises to the cytoplasm. The protein resides in the nucleus. Functionally, copper-sensing transcription factor that regulates iron uptake genes. Under copper starvation conditions activates the transcription of the copper transport genes, ctr4, ctr5 and ctr6. This is Metal-binding regulatory protein cuf1 (cuf1) from Schizosaccharomyces pombe (strain 972 / ATCC 24843) (Fission yeast).